Here is a 39-residue protein sequence, read N- to C-terminus: AVDAKLLDMLKANGQISASQYTELQAELAKDQKEKQIAQ.

The protein localises to the cell outer membrane. This Pseudomonas fluorescens protein is Phosphate starvation-inducible protein 1.